We begin with the raw amino-acid sequence, 116 residues long: Small ribosomal subunit protein bS18c (116 aa).

A compositionally biased stretch (polar residues) spans 1 to 13 (MKPSFRNTSPSFR). The disordered stretch occupies residues 1-51 (MKPSFRNTSPSFRNRSKPYFRNRSKPYFRNRSKPSFRNTSKRFSPNQQSFR). Positions 14 to 34 (NRSKPYFRNRSKPYFRNRSKP) are enriched in basic residues. Residues 35 to 49 (SFRNTSKRFSPNQQS) are compositionally biased toward polar residues.

The protein belongs to the bacterial ribosomal protein bS18 family. As to quaternary structure, part of the 30S ribosomal subunit.

It localises to the plastid. The protein resides in the chloroplast. The chain is Small ribosomal subunit protein bS18c from Cryptomeria japonica (Japanese cedar).